We begin with the raw amino-acid sequence, 274 residues long: CTO1 family protein C17G9.12c (274 aa).

The protein belongs to the CTO1 family.

It localises to the cytoplasm. Its subcellular location is the nucleus. The chain is CTO1 family protein C17G9.12c from Schizosaccharomyces pombe (strain 972 / ATCC 24843) (Fission yeast).